Consider the following 567-residue polypeptide: Potassium-transporting ATPase potassium-binding subunit (567 aa).

A run of 11 helical transmembrane segments spans residues 5 to 25 (GWIQ…PLGF), 64 to 84 (TAYA…LYAL), 136 to 156 (GLTV…IALI), 179 to 199 (LYVL…LGIP), 254 to 274 (ISNL…TNVF), 285 to 305 (WAIL…CYWA), 330 to 350 (FGIA…CGAV), 357 to 376 (FTAL…EVIV), 421 to 441 (MLAI…AVVL), 486 to 506 (ITIG…ALAI), and 529 to 549 (LFVG…FFPA).

The protein belongs to the KdpA family. As to quaternary structure, the system is composed of three essential subunits: KdpA, KdpB and KdpC.

It localises to the cell inner membrane. Its function is as follows. Part of the high-affinity ATP-driven potassium transport (or Kdp) system, which catalyzes the hydrolysis of ATP coupled with the electrogenic transport of potassium into the cytoplasm. This subunit binds the periplasmic potassium ions and delivers the ions to the membrane domain of KdpB through an intramembrane tunnel. The chain is Potassium-transporting ATPase potassium-binding subunit from Mesorhizobium japonicum (strain LMG 29417 / CECT 9101 / MAFF 303099) (Mesorhizobium loti (strain MAFF 303099)).